The following is a 1187-amino-acid chain: Nucleolar protein 6 (1187 aa).

The span at 1–20 (MGRIKENQSKKKTLLRDSKA) shows a compositional bias: basic and acidic residues. Disordered regions lie at residues 1–64 (MGRI…FKHP) and 1134–1187 (REQR…SALC).

Belongs to the NRAP family. As to quaternary structure, part of the small subunit (SSU) processome, composed of more than 70 proteins and the RNA chaperone small nucleolar RNA (snoRNA) U3.

The protein localises to the nucleus. Its subcellular location is the nucleolus. The protein resides in the chromosome. Functionally, part of the small subunit (SSU) processome, first precursor of the small eukaryotic ribosomal subunit. During the assembly of the SSU processome in the nucleolus, many ribosome biogenesis factors, an RNA chaperone and ribosomal proteins associate with the nascent pre-rRNA and work in concert to generate RNA folding, modifications, rearrangements and cleavage as well as targeted degradation of pre-ribosomal RNA by the RNA exosome. The protein is Nucleolar protein 6 of Drosophila mojavensis (Fruit fly).